The chain runs to 244 residues: RNA transcription, translation and transport factor protein (244 aa).

3 positions are modified to N6-acetyllysine: Lys20, Lys62, and Lys98.

Belongs to the RTRAF family. As to quaternary structure, homodimer. Interacts with FAM98A (via N- and C-terminus). Interacts with NIN; which may prevent phosphorylation of NIN. Interacts with POLR2A. Component of a tRNA-splicing ligase complex with FAM98B, DDX1 and RTCB. (Microbial infection) Interacts with influenza A virus (IAV) RNA polymerase subunits PA, PB1 and PB2, and nucleocapsid NP. Associates with IAV polymerase complexes both in the nucleus and cytosol. Associates with IAV ribonucleoproteins (vRNP) packaged in virions. Interacts with hepatitis C virus core protein p19. In terms of tissue distribution, widely expressed. Expressed at high level in heart and skeletal muscle. Expressed at intermediate level in liver, pancreas, fetal brain and fetal lung. Weakly expressed in adult brain, adult lung, placenta, fetal liver and fetal kidney. Overexpressed in many brain tumors.

Its subcellular location is the nucleus. It is found in the cytoplasm. It localises to the cytosol. The protein resides in the perinuclear region. The protein localises to the cytoskeleton. Its subcellular location is the microtubule organizing center. It is found in the centrosome. Functionally, RNA-binding protein involved in modulation of mRNA transcription by Polymerase II. Component of the tRNA-splicing ligase complex and is required for tRNA ligation. May be required for RNA transport. In terms of biological role, (Microbial infection) In case of infection by influenza virus A (IVA), is involved in viral replication. This Homo sapiens (Human) protein is RNA transcription, translation and transport factor protein.